The following is a 109-amino-acid chain: MNRHSTAASDRGLQAERTTLAWTRTAFALLVNGVLLTLKDTQGADGPAGLIPAGLAGAAASCCYVIALQRQRALSHRPLPARITPRGQVHILATAVLVLMVVTAFAQLL.

The next 2 membrane-spanning stretches (helical) occupy residues 18-38 and 48-68; these read TTLA…LLTL and AGLI…VIAL.

Its subcellular location is the cell membrane. This is an uncharacterized protein from Mycobacterium tuberculosis (strain CDC 1551 / Oshkosh).